A 422-amino-acid chain; its full sequence is Putative serpin-Z8 (422 aa).

Residues 369 to 393 (GTVAAAATMTRMLPSGVPPPPVDFV) form an RCL region.

Belongs to the serpin family.

In terms of biological role, probable serine protease inhibitor. The sequence is that of Putative serpin-Z8 from Oryza sativa subsp. japonica (Rice).